A 216-amino-acid chain; its full sequence is HTH-type transcriptional regulator EthR (216 aa).

Residues 1-10 (MTTSAASQAS) show a composition bias toward polar residues. Residues 1-24 (MTTSAASQASLPRGRRTARPSGDD) are disordered. The HTH tetR-type domain occupies 23–83 (DDRELAILAT…TLLDRVVNQA (61 aa)). Positions 46–65 (SVDDLAKGAGISRPTFYFYF) form a DNA-binding region, H-T-H motif.

As to quaternary structure, homodimer.

Involved in the repression of the monooxygenase EthA which is responsible of the formation of the active metabolite of ethionamide (ETH). In Mycobacterium bovis (strain ATCC BAA-935 / AF2122/97), this protein is HTH-type transcriptional regulator EthR (ethR).